Reading from the N-terminus, the 275-residue chain is Exosome complex component Rrp42 (275 aa).

The protein belongs to the RNase PH family. Rrp42 subfamily. Component of the archaeal exosome complex. Forms a hexameric ring-like arrangement composed of 3 Rrp41-Rrp42 heterodimers. The hexameric ring associates with a trimer of Rrp4 and/or Csl4 subunits.

Its subcellular location is the cytoplasm. Non-catalytic component of the exosome, which is a complex involved in RNA degradation. Contributes to the structuring of the Rrp41 active site. This chain is Exosome complex component Rrp42, found in Saccharolobus solfataricus (strain ATCC 35092 / DSM 1617 / JCM 11322 / P2) (Sulfolobus solfataricus).